A 344-amino-acid chain; its full sequence is S-adenosylmethionine:tRNA ribosyltransferase-isomerase (344 aa).

Belongs to the QueA family. In terms of assembly, monomer.

Its subcellular location is the cytoplasm. It carries out the reaction 7-aminomethyl-7-carbaguanosine(34) in tRNA + S-adenosyl-L-methionine = epoxyqueuosine(34) in tRNA + adenine + L-methionine + 2 H(+). The protein operates within tRNA modification; tRNA-queuosine biosynthesis. Functionally, transfers and isomerizes the ribose moiety from AdoMet to the 7-aminomethyl group of 7-deazaguanine (preQ1-tRNA) to give epoxyqueuosine (oQ-tRNA). The sequence is that of S-adenosylmethionine:tRNA ribosyltransferase-isomerase from Rhizorhabdus wittichii (strain DSM 6014 / CCUG 31198 / JCM 15750 / NBRC 105917 / EY 4224 / RW1) (Sphingomonas wittichii).